The sequence spans 209 residues: High mobility group protein B2 (209 aa).

Lys-3 is modified (N6-acetyllysine). A DNA-binding region (HMG box 1) is located at residues 9–79 (PRGKMSSYAF…RYDREMKNYV (71 aa)). At Cys-23 the chain carries Cysteine sulfonic acid (-SO3H); alternate. A disulfide bridge connects residues Cys-23 and Cys-45. Lys-30 is modified (N6-acetyllysine). The residue at position 35 (Ser-35) is a Phosphoserine. At Lys-43 the chain carries N6-acetyllysine. Position 45 is a cysteine sulfonic acid (-SO3H); alternate (Cys-45). Basic and acidic residues predominate over residues 52 to 76 (MSAKEKSKFEDMAKSDKARYDREMK). 2 disordered regions span residues 52 to 150 (MSAK…KAAK) and 162 to 209 (YRAK…EDEE). The residue at position 90 (Lys-90) is an N6-acetyllysine. The segment at residues 95-163 (PKRPPSAFFL…KYEKDIAAYR (69 aa)) is a DNA-binding region (HMG box 2). Ser-100 carries the post-translational modification Phosphoserine. Cysteine sulfonic acid (-SO3H) is present on Cys-106. Composition is skewed to basic and acidic residues over residues 107-117 (SEHRPKIKSEH), 137-150 (SAKD…KAAK), and 162-172 (YRAKGKSEAGK). Residues Lys-114 and Lys-141 each carry the N6-acetyllysine modification. Residues 165-180 (KGKSEAGKKGPGRPTG) are required for chemotactic activity. Residues 187–209 (PEDEEEEEEEEDEDEEEEDEDEE) are compositionally biased toward acidic residues.

It belongs to the HMGB family. As to quaternary structure, interacts with POU2F2, POU2F1 and POU3F1. Component of the RAG complex composed of core components RAG1 and RAG2, and associated component HMGB1 or HMGB2. Component of the SET complex, composed of at least ANP32A, APEX1, HMGB2, NME1, SET and TREX1. Directly interacts with SET. Interacts with LEF1. Reduction/oxidation of cysteine residues Cys-23, Cys-45 and Cys-106 and a possible intramolecular disulfide bond involving Cys-23 and Cys-45 give rise to different redox forms with specific functional activities in various cellular compartments: 1- fully reduced HMGB2 (HMGB2C23hC45hC106h), 2- disulfide HMGB2 (HMGB2C23-C45C106h) and 3- sulfonyl HMGB2 (HMGB2C23soC45soC106so).

The protein resides in the nucleus. The protein localises to the chromosome. Its subcellular location is the cytoplasm. It is found in the secreted. Multifunctional protein with various roles in different cellular compartments. May act in a redox sensitive manner. In the nucleus is an abundant chromatin-associated non-histone protein involved in transcription, chromatin remodeling and V(D)J recombination and probably other processes. Binds DNA with a preference to non-canonical DNA structures such as single-stranded DNA. Can bent DNA and enhance DNA flexibility by looping thus providing a mechanism to promote activities on various gene promoters by enhancing transcription factor binding and/or bringing distant regulatory sequences into close proximity. Involved in V(D)J recombination by acting as a cofactor of the RAG complex: acts by stimulating cleavage and RAG protein binding at the 23 bp spacer of conserved recombination signal sequences (RSS). Proposed to be involved in the innate immune response to nucleic acids by acting as a cytoplasmic promiscuous immunogenic DNA/RNA sensor which cooperates with subsequent discriminative sensing by specific pattern recognition receptors. In the extracellular compartment acts as a chemokine. Promotes proliferation and migration of endothelial cells implicating AGER/RAGE. Has antimicrobial activity in gastrointestinal epithelial tissues. Involved in inflammatory response to antigenic stimulus coupled with pro-inflammatory activity. May play a role in germ cell differentiation. Involved in modulation of neurogenesis probably by regulation of neural stem proliferation. Involved in articular cartilage surface maintenance implicating LEF1 and the Wnt/beta-catenin pathway. The sequence is that of High mobility group protein B2 (HMGB2) from Bos taurus (Bovine).